We begin with the raw amino-acid sequence, 338 residues long: Anthranilate phosphoribosyltransferase (338 aa).

Residues Gly81, 84–85, Ser89, 91–94, 109–117, and Ala121 contribute to the 5-phospho-alpha-D-ribose 1-diphosphate site; these read GD, NVST, and KHGNRALSS. Gly81 lines the anthranilate pocket. Residue Ser93 participates in Mg(2+) binding. Asn112 provides a ligand contact to anthranilate. Arg167 contributes to the anthranilate binding site. Residues Asp226 and Glu227 each contribute to the Mg(2+) site.

Belongs to the anthranilate phosphoribosyltransferase family. As to quaternary structure, homodimer. It depends on Mg(2+) as a cofactor.

It carries out the reaction N-(5-phospho-beta-D-ribosyl)anthranilate + diphosphate = 5-phospho-alpha-D-ribose 1-diphosphate + anthranilate. The protein operates within amino-acid biosynthesis; L-tryptophan biosynthesis; L-tryptophan from chorismate: step 2/5. Its function is as follows. Catalyzes the transfer of the phosphoribosyl group of 5-phosphorylribose-1-pyrophosphate (PRPP) to anthranilate to yield N-(5'-phosphoribosyl)-anthranilate (PRA). In Rhodopseudomonas palustris (strain ATCC BAA-98 / CGA009), this protein is Anthranilate phosphoribosyltransferase.